The sequence spans 152 residues: Deoxyuridine 5'-triphosphate nucleotidohydrolase (152 aa).

Substrate contacts are provided by residues 70–72 (RSG), N83, 87–89 (LID), and M97.

Belongs to the dUTPase family. It depends on Mg(2+) as a cofactor.

The catalysed reaction is dUTP + H2O = dUMP + diphosphate + H(+). Its pathway is pyrimidine metabolism; dUMP biosynthesis; dUMP from dCTP (dUTP route): step 2/2. In terms of biological role, this enzyme is involved in nucleotide metabolism: it produces dUMP, the immediate precursor of thymidine nucleotides and it decreases the intracellular concentration of dUTP so that uracil cannot be incorporated into DNA. In Buchnera aphidicola subsp. Baizongia pistaciae (strain Bp), this protein is Deoxyuridine 5'-triphosphate nucleotidohydrolase.